We begin with the raw amino-acid sequence, 743 residues long: Phenylalanine ammonia-lyase 1 (743 aa).

The Proton donor/acceptor role is filled by Tyr120. The 5-imidazolinone (Ala-Gly) cross-link spans 224 to 226 (ASG). Ser225 carries the post-translational modification 2,3-didehydroalanine (Ser). The (E)-cinnamate site is built by Asn287, Gln377, Arg383, Asn413, Lys484, Glu512, and Asn515.

Belongs to the PAL/histidase family. As to quaternary structure, homotetramer. Post-translationally, contains an active site 4-methylidene-imidazol-5-one (MIO), which is formed autocatalytically by cyclization and dehydration of residues Ala-Ser-Gly.

The protein resides in the cytoplasm. It catalyses the reaction L-phenylalanine = (E)-cinnamate + NH4(+). The protein operates within phenylpropanoid metabolism; trans-cinnamate biosynthesis; trans-cinnamate from L-phenylalanine: step 1/1. Its function is as follows. Catalyzes the non-oxidative deamination of L-phenylalanine to form trans-cinnamic acid and a free ammonium ion. Facilitates the commitment step in phenylpropanoid pathways that produce secondary metabolites such as lignins, coumarins and flavonoids. This is Phenylalanine ammonia-lyase 1 from Pleurotus ostreatus (Oyster mushroom).